Consider the following 522-residue polypeptide: Na(+)/H(+) antiporter NhaB (522 aa).

Helical transmembrane passes span 25 to 45 (VFLV…GWLL), 49 to 69 (FIFT…GMLA), 87 to 107 (ILAN…IYFM), 128 to 162 (LSLA…FYGV), 201 to 221 (LMMH…VGEP), 237 to 257 (FFFR…VTCI), 302 to 322 (VFVG…VGLI), 356 to 376 (LVVF…APVI), 388 to 408 (LLLF…VFVA), 446 to 466 (ATPN…SPLI), and 476 to 496 (MALP…EYVL).

It belongs to the NhaB Na(+)/H(+) (TC 2.A.34) antiporter family.

The protein resides in the cell inner membrane. The catalysed reaction is 2 Na(+)(in) + 3 H(+)(out) = 2 Na(+)(out) + 3 H(+)(in). Functionally, na(+)/H(+) antiporter that extrudes sodium in exchange for external protons. In Actinobacillus succinogenes (strain ATCC 55618 / DSM 22257 / CCUG 43843 / 130Z), this protein is Na(+)/H(+) antiporter NhaB.